A 261-amino-acid polypeptide reads, in one-letter code: DNA repair protein RecO (261 aa).

This sequence belongs to the RecO family.

Involved in DNA repair and RecF pathway recombination. This is DNA repair protein RecO from Gloeobacter violaceus (strain ATCC 29082 / PCC 7421).